A 41-amino-acid polypeptide reads, in one-letter code: Inducible serine protease inhibitor 3 (41 aa).

Inhibits trypsin and the toxin proteases PR1 and PR2 of M.anisopliae. Does not inhibit chymotrypsin, subtilisin Carlsberg, proteinase K and porcine pancreatic elastase. The chain is Inducible serine protease inhibitor 3 from Galleria mellonella (Greater wax moth).